A 209-amino-acid chain; its full sequence is Isopentenyl-diphosphate Delta-isomerase (209 aa).

Residues H31 and H38 each coordinate Mn(2+). Residues 36–171 (PLHLAFSVYI…RLLVSPWCRA (136 aa)) enclose the Nudix hydrolase domain. C73 is an active-site residue. C73 serves as a coordination point for Mg(2+). H75 is a Mn(2+) binding site. E93 contacts Mg(2+). Mn(2+) is bound by residues E120 and E122. Residue E122 is part of the active site.

This sequence belongs to the IPP isomerase type 1 family. The cofactor is Mg(2+). Mn(2+) serves as cofactor.

The protein localises to the cytoplasm. The catalysed reaction is isopentenyl diphosphate = dimethylallyl diphosphate. It participates in isoprenoid biosynthesis; dimethylallyl diphosphate biosynthesis; dimethylallyl diphosphate from isopentenyl diphosphate: step 1/1. Functionally, catalyzes the 1,3-allylic rearrangement of the homoallylic substrate isopentenyl (IPP) to its highly electrophilic allylic isomer, dimethylallyl diphosphate (DMAPP). This chain is Isopentenyl-diphosphate Delta-isomerase, found in Rhizobium rhizogenes (Agrobacterium rhizogenes).